We begin with the raw amino-acid sequence, 276 residues long: Rhomboid-type serine protease 2 (276 aa).

5 helical membrane passes run 27 to 47, 77 to 97, 109 to 129, 132 to 152, and 175 to 195; these read LPLF…LTLV, FPFI…FTPL, TSVA…YVFV, FILH…LLLG, and WITP…SSFL. Ser-144 (nucleophile) is an active-site residue. Residue His-197 is part of the active site. A helical transmembrane segment spans residues 198–218; the sequence is LAGLLVGYGFGLGYLKFLAPP.

It belongs to the peptidase S54 family.

It localises to the golgi apparatus membrane. Its subcellular location is the golgi apparatus. The protein localises to the cis-Golgi network membrane. It catalyses the reaction Cleaves type-1 transmembrane domains using a catalytic dyad composed of serine and histidine that are contributed by different transmembrane domains.. Its function is as follows. Probable rhomboid-type serine protease that catalyzes intramembrane proteolysis. The chain is Rhomboid-type serine protease 2 (rbd-2) from Neurospora crassa (strain ATCC 24698 / 74-OR23-1A / CBS 708.71 / DSM 1257 / FGSC 987).